We begin with the raw amino-acid sequence, 512 residues long: Glutamyl-tRNA(Gln) amidotransferase subunit A (512 aa).

Residues Lys82 and Ser157 each act as charge relay system in the active site. Residue Ser181 is the Acyl-ester intermediate of the active site.

The protein belongs to the amidase family. GatA subfamily. As to quaternary structure, heterotrimer of A, B and C subunits.

The catalysed reaction is L-glutamyl-tRNA(Gln) + L-glutamine + ATP + H2O = L-glutaminyl-tRNA(Gln) + L-glutamate + ADP + phosphate + H(+). Its function is as follows. Allows the formation of correctly charged Gln-tRNA(Gln) through the transamidation of misacylated Glu-tRNA(Gln) in organisms which lack glutaminyl-tRNA synthetase. The reaction takes place in the presence of glutamine and ATP through an activated gamma-phospho-Glu-tRNA(Gln). In Bordetella petrii (strain ATCC BAA-461 / DSM 12804 / CCUG 43448), this protein is Glutamyl-tRNA(Gln) amidotransferase subunit A.